A 366-amino-acid chain; its full sequence is Ribosomal RNA large subunit methyltransferase M (366 aa).

Residues serine 188, 221–224 (CPGG), aspartate 240, aspartate 260, and aspartate 277 contribute to the S-adenosyl-L-methionine site. The Proton acceptor role is filled by lysine 306.

The protein belongs to the class I-like SAM-binding methyltransferase superfamily. RNA methyltransferase RlmE family. RlmM subfamily. Monomer.

It is found in the cytoplasm. The catalysed reaction is cytidine(2498) in 23S rRNA + S-adenosyl-L-methionine = 2'-O-methylcytidine(2498) in 23S rRNA + S-adenosyl-L-homocysteine + H(+). In terms of biological role, catalyzes the 2'-O-methylation at nucleotide C2498 in 23S rRNA. This chain is Ribosomal RNA large subunit methyltransferase M, found in Shigella sonnei (strain Ss046).